Reading from the N-terminus, the 181-residue chain is Glucose-1-phosphate adenylyltransferase large subunit 2 (181 aa).

Belongs to the bacterial/plant glucose-1-phosphate adenylyltransferase family. As to quaternary structure, heterotetramer. In terms of tissue distribution, leaves.

Its subcellular location is the plastid. The protein resides in the chloroplast. It localises to the amyloplast. It carries out the reaction alpha-D-glucose 1-phosphate + ATP + H(+) = ADP-alpha-D-glucose + diphosphate. Its pathway is glycan biosynthesis; starch biosynthesis. Its activity is regulated as follows. Highly active without 3'phosphoglycerate, and is only slightly affected by the activator 3'phosphoglycerate and inhibitor orthophosphate. In terms of biological role, this protein plays a role in synthesis of starch. It catalyzes the synthesis of the activated glycosyl donor, ADP-glucose from Glc-1-P and ATP. This chain is Glucose-1-phosphate adenylyltransferase large subunit 2, found in Hordeum vulgare (Barley).